Reading from the N-terminus, the 647-residue chain is Threonine--tRNA ligase (647 aa).

In terms of domain architecture, TGS spans 1–61 (MINITFPDGA…TEDGSIEIVT (61 aa)). Residues 242-540 (DHRKLGKELD…LIENYKGAFP (299 aa)) are catalytic. Residues Cys-336, His-387, and His-517 each contribute to the Zn(2+) site.

The protein belongs to the class-II aminoacyl-tRNA synthetase family. As to quaternary structure, homodimer. Zn(2+) is required as a cofactor.

It localises to the cytoplasm. It catalyses the reaction tRNA(Thr) + L-threonine + ATP = L-threonyl-tRNA(Thr) + AMP + diphosphate + H(+). In terms of biological role, catalyzes the attachment of threonine to tRNA(Thr) in a two-step reaction: L-threonine is first activated by ATP to form Thr-AMP and then transferred to the acceptor end of tRNA(Thr). Also edits incorrectly charged L-seryl-tRNA(Thr). The protein is Threonine--tRNA ligase of Streptococcus pneumoniae (strain 70585).